The following is a 210-amino-acid chain: Probable membrane protein Rv1733c (210 aa).

2 consecutive transmembrane segments (helical) span residues 43–63 (AVVMLLAVTVSLLTIPFAAAA) and 165–185 (ALAALGLWLSVAAVAGALLAL).

It localises to the cell membrane. The chain is Probable membrane protein Rv1733c from Mycobacterium tuberculosis (strain ATCC 25618 / H37Rv).